The sequence spans 1939 residues: Myosin-8 (1939 aa).

Residues aspartate 35–proline 84 enclose the Myosin N-terminal SH3-like domain. Phosphothreonine occurs at positions 66 and 71. Positions aspartate 88–aspartate 783 constitute a Myosin motor domain. Position 132 is an N6,N6,N6-trimethyllysine (lysine 132). Glycine 181–threonine 188 is a binding site for ATP. Tyrosine 391 is modified (phosphotyrosine). Threonine 421 is subject to Phosphothreonine. Tyrosine 426 is subject to Phosphotyrosine. A Phosphoserine modification is found at serine 627. The tract at residues leucine 660–glutamate 682 is actin-binding. Histidine 758 is subject to Pros-methylhistidine. Residues lysine 762–glycine 776 form an actin-binding region. The IQ domain occupies aspartate 783–alanine 815. Residues leucine 844–glutamate 1939 adopt a coiled-coil conformation. 4 positions are modified to phosphoserine: serine 1093, serine 1097, serine 1163, and serine 1238. A Phosphothreonine modification is found at threonine 1242. A Phosphoserine modification is found at serine 1244. Threonine 1256 carries the post-translational modification Phosphothreonine. At serine 1262 the chain carries Phosphoserine. Residues threonine 1266 and threonine 1287 each carry the phosphothreonine modification. Serine 1293, serine 1304, and serine 1307 each carry phosphoserine. Tyrosine 1465 is subject to Phosphotyrosine. Residue threonine 1468 is modified to Phosphothreonine. Position 1475 is a phosphoserine (serine 1475). Tyrosine 1493 is subject to Phosphotyrosine. Serine 1496 carries the phosphoserine modification. Phosphothreonine is present on threonine 1502. A Phosphoserine modification is found at serine 1515. The residue at position 1518 (threonine 1518) is a Phosphothreonine. 6 positions are modified to phosphoserine: serine 1555, serine 1575, serine 1601, serine 1604, serine 1715, and serine 1727. Threonine 1731 is modified (phosphothreonine). A Phosphoserine modification is found at serine 1740.

The protein belongs to the TRAFAC class myosin-kinesin ATPase superfamily. Myosin family. Muscle myosin is a hexameric protein that consists of 2 heavy chain subunits (MHC), 2 alkali light chain subunits (MLC) and 2 regulatory light chain subunits (MLC-2).

It localises to the cytoplasm. The protein resides in the myofibril. Muscle contraction. In Canis lupus familiaris (Dog), this protein is Myosin-8 (MYH8).